Reading from the N-terminus, the 174-residue chain is Peroxisome assembly protein 22 (174 aa).

Residues 9–27 (GYLAIIAAVSIGAAAYLWW) traverse the membrane as a helical segment.

It belongs to the peroxin-22 family.

The protein localises to the peroxisome membrane. In terms of biological role, involved in peroxisome biogenesis. The chain is Peroxisome assembly protein 22 (PEX22) from Candida glabrata (strain ATCC 2001 / BCRC 20586 / JCM 3761 / NBRC 0622 / NRRL Y-65 / CBS 138) (Yeast).